The chain runs to 461 residues: L-seryl-tRNA(Sec) selenium transferase (461 aa).

Lys294 carries the N6-(pyridoxal phosphate)lysine modification.

It belongs to the SelA family. Pyridoxal 5'-phosphate is required as a cofactor.

It localises to the cytoplasm. It catalyses the reaction L-seryl-tRNA(Sec) + selenophosphate + H(+) = L-selenocysteinyl-tRNA(Sec) + phosphate. It participates in aminoacyl-tRNA biosynthesis; selenocysteinyl-tRNA(Sec) biosynthesis; selenocysteinyl-tRNA(Sec) from L-seryl-tRNA(Sec) (bacterial route): step 1/1. Converts seryl-tRNA(Sec) to selenocysteinyl-tRNA(Sec) required for selenoprotein biosynthesis. The polypeptide is L-seryl-tRNA(Sec) selenium transferase (Actinobacillus pleuropneumoniae serotype 7 (strain AP76)).